A 198-amino-acid chain; its full sequence is Holliday junction branch migration complex subunit RuvA (198 aa).

Residues 1 to 61 (MYEYFEGIIQ…DNDQTLYGFE (61 aa)) are domain I. Positions 62 to 140 (GAADKRTFNQ…TDGQPAAAAI (79 aa)) are domain II. The interval 141–145 (APVAS) is flexible linker. The interval 146 to 198 (DVDSELADALAALVALGYPQRTVDGLTDTLKAFSAKTTDAYLREGLRLLSGKA) is domain III.

The protein belongs to the RuvA family. Homotetramer. Forms an RuvA(8)-RuvB(12)-Holliday junction (HJ) complex. HJ DNA is sandwiched between 2 RuvA tetramers; dsDNA enters through RuvA and exits via RuvB. An RuvB hexamer assembles on each DNA strand where it exits the tetramer. Each RuvB hexamer is contacted by two RuvA subunits (via domain III) on 2 adjacent RuvB subunits; this complex drives branch migration. In the full resolvosome a probable DNA-RuvA(4)-RuvB(12)-RuvC(2) complex forms which resolves the HJ.

It localises to the cytoplasm. Its function is as follows. The RuvA-RuvB-RuvC complex processes Holliday junction (HJ) DNA during genetic recombination and DNA repair, while the RuvA-RuvB complex plays an important role in the rescue of blocked DNA replication forks via replication fork reversal (RFR). RuvA specifically binds to HJ cruciform DNA, conferring on it an open structure. The RuvB hexamer acts as an ATP-dependent pump, pulling dsDNA into and through the RuvAB complex. HJ branch migration allows RuvC to scan DNA until it finds its consensus sequence, where it cleaves and resolves the cruciform DNA. In Lacticaseibacillus casei (strain BL23) (Lactobacillus casei), this protein is Holliday junction branch migration complex subunit RuvA.